A 250-amino-acid chain; its full sequence is Ribosomal RNA small subunit methyltransferase J (250 aa).

Residues 96–97 (RD) and aspartate 168 each bind S-adenosyl-L-methionine.

The protein belongs to the methyltransferase superfamily. RsmJ family.

Its subcellular location is the cytoplasm. It catalyses the reaction guanosine(1516) in 16S rRNA + S-adenosyl-L-methionine = N(2)-methylguanosine(1516) in 16S rRNA + S-adenosyl-L-homocysteine + H(+). Its function is as follows. Specifically methylates the guanosine in position 1516 of 16S rRNA. The chain is Ribosomal RNA small subunit methyltransferase J from Neisseria gonorrhoeae (strain ATCC 700825 / FA 1090).